Consider the following 742-residue polypeptide: Phosphoribosylformylglycinamidine synthase subunit PurL (742 aa).

H54 is an active-site residue. ATP contacts are provided by Y57 and K96. E98 is a Mg(2+) binding site. Substrate contacts are provided by residues 99-102 (SHNH) and R121. H100 serves as the catalytic Proton acceptor. A Mg(2+)-binding site is contributed by D122. G225 and Q245 together coordinate substrate. D273 is a Mg(2+) binding site. 317–319 (ESQ) serves as a coordination point for substrate. G537 is a binding site for ATP. Residue N538 participates in Mg(2+) binding. A substrate-binding site is contributed by S540.

This sequence belongs to the FGAMS family. Monomer. Part of the FGAM synthase complex composed of 1 PurL, 1 PurQ and 2 PurS subunits.

Its subcellular location is the cytoplasm. It carries out the reaction N(2)-formyl-N(1)-(5-phospho-beta-D-ribosyl)glycinamide + L-glutamine + ATP + H2O = 2-formamido-N(1)-(5-O-phospho-beta-D-ribosyl)acetamidine + L-glutamate + ADP + phosphate + H(+). The catalysed reaction is L-glutamine + H2O = L-glutamate + NH4(+). It functions in the pathway purine metabolism; IMP biosynthesis via de novo pathway; 5-amino-1-(5-phospho-D-ribosyl)imidazole from N(2)-formyl-N(1)-(5-phospho-D-ribosyl)glycinamide: step 1/2. Functionally, part of the phosphoribosylformylglycinamidine synthase complex involved in the purines biosynthetic pathway. Catalyzes the ATP-dependent conversion of formylglycinamide ribonucleotide (FGAR) and glutamine to yield formylglycinamidine ribonucleotide (FGAM) and glutamate. The FGAM synthase complex is composed of three subunits. PurQ produces an ammonia molecule by converting glutamine to glutamate. PurL transfers the ammonia molecule to FGAR to form FGAM in an ATP-dependent manner. PurS interacts with PurQ and PurL and is thought to assist in the transfer of the ammonia molecule from PurQ to PurL. The sequence is that of Phosphoribosylformylglycinamidine synthase subunit PurL from Bacillus subtilis (strain 168).